Consider the following 389-residue polypeptide: Transaldolase (389 aa).

The Schiff-base intermediate with substrate role is filled by K136. EF-hand domains follow at residues 330 to 365 (ALNQAFESIFRTFDLDGDGFITREEWMGTDAVFDAI) and 365 to 388 (IDLNHDGKITAEELGAGIGAVSKL). Residues D343, D345, D347, E354, D366, N368, D370, K372, and E377 each coordinate Ca(2+).

This sequence belongs to the transaldolase family. Type 1 subfamily.

It is found in the cytoplasm. The catalysed reaction is D-sedoheptulose 7-phosphate + D-glyceraldehyde 3-phosphate = D-erythrose 4-phosphate + beta-D-fructose 6-phosphate. Its pathway is carbohydrate degradation; pentose phosphate pathway; D-glyceraldehyde 3-phosphate and beta-D-fructose 6-phosphate from D-ribose 5-phosphate and D-xylulose 5-phosphate (non-oxidative stage): step 2/3. Its function is as follows. Transaldolase is important for the balance of metabolites in the pentose-phosphate pathway. The protein is Transaldolase of Gloeobacter violaceus (strain ATCC 29082 / PCC 7421).